A 246-amino-acid polypeptide reads, in one-letter code: E3 ubiquitin-protein ligase MARCHF2 (246 aa).

An RING-CH-type zinc finger spans residues 56 to 116; the sequence is DTPSDCPFCR…ELCHTEFAVE (61 aa). Zn(2+)-binding residues include C64, C67, C80, C82, H90, C93, C106, and C109. Residues 121–246 form a required for interaction with IKBKG region; sequence PLTEWLKDPG…LKKVAEETPV (126 aa). 2 consecutive transmembrane segments (helical) span residues 138–158 and 175–195; these read LCCD…SGWL and AVGL…WTLV.

As to quaternary structure, interacts with STX6; the interaction promotes MARCHF2-mediated ubiquitination and degradation of CFTR. Interacts with MARCHF3. Interacts with GOPC/CAL; the interaction leads to CFTR ubiquitination and degradation. Interacts with CFTR; the interaction leads to CFTR ubiqtuitination and degradation. Interacts (via PDZ domain) with DLG1 (via PDZ domains); the interaction leads to DLG1 ubiqtuitination and degradation. Interacts with ERGIC3. Interacts with ADRB2. Interacts with IKBKG/NEMO; during the late stages of macrophage viral and bacterial infection; the interaction leads to ubiquitination and degradation of IKBKG/NEMO. Ubiquitously expressed. Present in liver (at protein level).

The protein localises to the endoplasmic reticulum membrane. It localises to the lysosome membrane. Its subcellular location is the endosome membrane. The protein resides in the golgi apparatus membrane. It is found in the cytoplasm. The protein localises to the cell membrane. The catalysed reaction is S-ubiquitinyl-[E2 ubiquitin-conjugating enzyme]-L-cysteine + [acceptor protein]-L-lysine = [E2 ubiquitin-conjugating enzyme]-L-cysteine + N(6)-ubiquitinyl-[acceptor protein]-L-lysine.. It participates in protein modification; protein ubiquitination. E3 ubiquitin-protein ligase that may mediate ubiquitination of TFRC and CD86, and promote their subsequent endocytosis and sorting to lysosomes via multivesicular bodies. E3 ubiquitin ligases accept ubiquitin from an E2 ubiquitin-conjugating enzyme in the form of a thioester and then directly transfer the ubiquitin to targeted substrates. Together with GOPC/CAL mediates the ubiquitination and lysosomal degradation of CFTR. Ubiquitinates and therefore mediates the degradation of DLG1. Regulates the intracellular trafficking and secretion of alpha1-antitrypsin/SERPINA1 and HP/haptoglobin via ubiquitination and degradation of the cargo receptor ERGIC3. Negatively regulates the antiviral and antibacterial immune response by repression of the NF-kB and type 1 IFN signaling pathways, via MARCHF2-mediated K48-linked polyubiquitination of IKBKG/NEMO, resulting in its proteasomal degradation. May be involved in endosomal trafficking through interaction with STX6. This is E3 ubiquitin-protein ligase MARCHF2 (Marchf2) from Rattus norvegicus (Rat).